The primary structure comprises 549 residues: Alanine aminotransferase 2-like (549 aa).

Position 367 is an N6-(pyridoxal phosphate)lysine (lysine 367).

Belongs to the class-I pyridoxal-phosphate-dependent aminotransferase family. Alanine aminotransferase subfamily. As to quaternary structure, homodimer. It depends on pyridoxal 5'-phosphate as a cofactor.

It carries out the reaction L-alanine + 2-oxoglutarate = pyruvate + L-glutamate. It participates in amino-acid degradation; L-alanine degradation via transaminase pathway; pyruvate from L-alanine: step 1/1. In terms of biological role, catalyzes the reversible transamination between alanine and 2-oxoglutarate to form pyruvate and glutamate. This Danio rerio (Zebrafish) protein is Alanine aminotransferase 2-like (gpt2l).